Reading from the N-terminus, the 317-residue chain is Porphobilinogen deaminase (317 aa).

S-(dipyrrolylmethanemethyl)cysteine is present on Cys-245.

This sequence belongs to the HMBS family. As to quaternary structure, monomer. It depends on dipyrromethane as a cofactor.

It carries out the reaction 4 porphobilinogen + H2O = hydroxymethylbilane + 4 NH4(+). Its pathway is porphyrin-containing compound metabolism; protoporphyrin-IX biosynthesis; coproporphyrinogen-III from 5-aminolevulinate: step 2/4. The protein operates within porphyrin-containing compound metabolism; chlorophyll biosynthesis. In terms of biological role, tetrapolymerization of the monopyrrole PBG into the hydroxymethylbilane pre-uroporphyrinogen in several discrete steps. The sequence is that of Porphobilinogen deaminase from Synechococcus sp. (strain CC9902).